The primary structure comprises 289 residues: ATP synthase gamma chain (289 aa).

The protein belongs to the ATPase gamma chain family. As to quaternary structure, F-type ATPases have 2 components, CF(1) - the catalytic core - and CF(0) - the membrane proton channel. CF(1) has five subunits: alpha(3), beta(3), gamma(1), delta(1), epsilon(1). CF(0) has three main subunits: a, b and c.

It is found in the cell inner membrane. Produces ATP from ADP in the presence of a proton gradient across the membrane. The gamma chain is believed to be important in regulating ATPase activity and the flow of protons through the CF(0) complex. This chain is ATP synthase gamma chain, found in Cereibacter sphaeroides (strain ATCC 17025 / ATH 2.4.3) (Rhodobacter sphaeroides).